A 207-amino-acid chain; its full sequence is Small ribosomal subunit protein uS4 (207 aa).

Over residues 31 to 40 (KCRLDNKPGQ) the composition is skewed to basic and acidic residues. The interval 31–56 (KCRLDNKPGQDGRTSGSRTSDYGNQL) is disordered. The segment covering 42–53 (GRTSGSRTSDYG) has biased composition (polar residues). The region spanning 97-158 (SRLDNVVYRM…KAKKQARITE (62 aa)) is the S4 RNA-binding domain.

Belongs to the universal ribosomal protein uS4 family. In terms of assembly, part of the 30S ribosomal subunit. Contacts protein S5. The interaction surface between S4 and S5 is involved in control of translational fidelity.

One of the primary rRNA binding proteins, it binds directly to 16S rRNA where it nucleates assembly of the body of the 30S subunit. Its function is as follows. With S5 and S12 plays an important role in translational accuracy. The chain is Small ribosomal subunit protein uS4 from Polynucleobacter necessarius subsp. necessarius (strain STIR1).